The following is a 163-amino-acid chain: NADH-quinone oxidoreductase subunit J (163 aa).

A run of 5 helical transmembrane segments spans residues 1 to 21 (MEFVFYACSLIAVISTLLVII), 30 to 50 (LYLIISLLSISGIFFIFGAFF), 54 to 74 (LEVVIYAGAIIVLFVFVIMML), 94 to 114 (IGPSFLSLILFLLMTYAIFFV), and 138 to 158 (LLLVELSSLLLLSALVVVFHI).

It belongs to the complex I subunit 6 family. Composed of 13 different subunits. Subunits NuoA, H, J, K, L, M, N constitute the membrane sector of the complex.

It localises to the cell membrane. It catalyses the reaction a quinone + NADH + 5 H(+)(in) = a quinol + NAD(+) + 4 H(+)(out). In terms of biological role, NDH-1 shuttles electrons from NADH, via FMN and iron-sulfur (Fe-S) centers, to quinones in the respiratory chain. Couples the redox reaction to proton translocation (for every two electrons transferred, four hydrogen ions are translocated across the cytoplasmic membrane), and thus conserves the redox energy in a proton gradient. This is NADH-quinone oxidoreductase subunit J (nuoJ) from Buchnera aphidicola subsp. Schizaphis graminum (strain Sg).